Reading from the N-terminus, the 352-residue chain is Aspartic protease Bla g 2 (352 aa).

The signal sequence occupies residues 1 to 19 (MIGLKLVTVLFAVATITHA). A propeptide spans 20 to 24 (AELQR) (removed in mature form). Residues 39–346 (YAGITKIGNQ…NWENKTMGFG (308 aa)) enclose the Peptidase A1 domain. Asp55 is a catalytic residue. 3 disulfides stabilise this stretch: Cys59/Cys151, Cys68/Cys73, and Cys75/Cys136. N-linked (GlcNAc...) asparagine glycosylation occurs at Asn117. Positions 178 and 186 each coordinate Zn(2+). Asp239 is an active-site residue. 2 disulfides stabilise this stretch: Cys261–Cys272 and Cys276–Cys309. An N-linked (GlcNAc...) asparagine glycan is attached at Asn295. Zn(2+) contacts are provided by Asp326 and Asp330. Asn340 carries N-linked (GlcNAc...) asparagine glycosylation.

It belongs to the peptidase A1 family. Homodimer.

Functions as a digestive enzyme in the cockroach. This is Aspartic protease Bla g 2 from Blattella germanica (German cockroach).